The chain runs to 198 residues: Dephospho-CoA kinase (198 aa).

One can recognise a DPCK domain in the interval 4–198 (FLGLTGGIAS…LSDLLQEIGR (195 aa)). Position 12-17 (12-17 (ASGKST)) interacts with ATP.

Belongs to the CoaE family.

It localises to the cytoplasm. The enzyme catalyses 3'-dephospho-CoA + ATP = ADP + CoA + H(+). It participates in cofactor biosynthesis; coenzyme A biosynthesis; CoA from (R)-pantothenate: step 5/5. Functionally, catalyzes the phosphorylation of the 3'-hydroxyl group of dephosphocoenzyme A to form coenzyme A. This is Dephospho-CoA kinase from Lactobacillus johnsonii (strain CNCM I-12250 / La1 / NCC 533).